A 268-amino-acid chain; its full sequence is Shikimate dehydrogenase (NADP(+)) (268 aa).

Shikimate-binding positions include 13–15 (SLS) and threonine 60. Catalysis depends on lysine 64, which acts as the Proton acceptor. Residue glutamate 76 participates in NADP(+) binding. Residues asparagine 85 and aspartate 100 each contribute to the shikimate site. Residues 124–128 (GAGGA), 148–153 (NRTMAR), and isoleucine 209 contribute to the NADP(+) site. Residue tyrosine 211 participates in shikimate binding. Residue glycine 232 participates in NADP(+) binding.

Belongs to the shikimate dehydrogenase family. As to quaternary structure, homodimer.

It catalyses the reaction shikimate + NADP(+) = 3-dehydroshikimate + NADPH + H(+). It participates in metabolic intermediate biosynthesis; chorismate biosynthesis; chorismate from D-erythrose 4-phosphate and phosphoenolpyruvate: step 4/7. In terms of biological role, involved in the biosynthesis of the chorismate, which leads to the biosynthesis of aromatic amino acids. Catalyzes the reversible NADPH linked reduction of 3-dehydroshikimate (DHSA) to yield shikimate (SA). The polypeptide is Shikimate dehydrogenase (NADP(+)) (Staphylococcus aureus (strain JH1)).